Reading from the N-terminus, the 255-residue chain is 5'-nucleotidase SurE (255 aa).

The a divalent metal cation site is built by D8, D9, S40, and N92.

The protein belongs to the SurE nucleotidase family. Requires a divalent metal cation as cofactor.

Its subcellular location is the cytoplasm. It catalyses the reaction a ribonucleoside 5'-phosphate + H2O = a ribonucleoside + phosphate. Its function is as follows. Nucleotidase that shows phosphatase activity on nucleoside 5'-monophosphates. The chain is 5'-nucleotidase SurE from Brucella suis (strain ATCC 23445 / NCTC 10510).